Consider the following 465-residue polypeptide: GTPase Der (465 aa).

2 consecutive EngA-type G domains span residues 3-167 (PLVA…PERG) and 179-352 (IHIA…VSAL). GTP contacts are provided by residues 9-16 (GRPNVGKS), 57-61 (DTGGM), 119-122 (NKID), 185-192 (GRPNVGKS), 232-236 (DTAGL), and 297-300 (NKWD). Positions 353–437 (RQFSTSEVNK…PVRFLFREGD (85 aa)) constitute a KH-like domain.

Belongs to the TRAFAC class TrmE-Era-EngA-EngB-Septin-like GTPase superfamily. EngA (Der) GTPase family. In terms of assembly, associates with the 50S ribosomal subunit.

GTPase that plays an essential role in the late steps of ribosome biogenesis. This is GTPase Der from Xylella fastidiosa (strain 9a5c).